The sequence spans 215 residues: Sodium channel regulatory subunit beta-3 (215 aa).

The signal sequence occupies residues 1–22; that stretch reads MPAFNRLFPLASLVLIYWVSVC. Residues 23-156 are Extracellular-facing; sequence FPVCVEVPSE…EEAGEDFTSV (134 aa). 2 disulfide bridges follow: cysteine 26–cysteine 48 and cysteine 45–cysteine 120. One can recognise an Ig-like C2-type domain in the interval 32 to 154; the sequence is ETEAVQGNPM…VTEEAGEDFT (123 aa). N-linked (GlcNAc...) asparagine glycans are attached at residues asparagine 95, asparagine 109, asparagine 113, and asparagine 121. A helical membrane pass occupies residues 157-178; that stretch reads VSEIMMYILLVFLTLWLLIEMI. At 179-215 the chain is on the cytoplasmic side; the sequence is YCYRKVSKAEEAAQENASDYLAIPSENKENSAVPVEE.

The protein belongs to the sodium channel auxiliary subunit SCN3B (TC 8.A.17) family. In terms of assembly, a voltage-gated sodium (Nav) channel consists of an ion-conducting pore-forming alpha subunit functional on its own that is regulated by one or more beta subunits. Forms homodimers and homotrimers. SCN3B is non-covalently associated with alpha subunits and induces the formation of alpha subunit oligomers, including trimers. Interacts with SCN5A/Nav1.5; regulatory subunit of SCN5A/Nav1.5. Interacts with SCN7A/Nav2.1; probable regulatory subunit of SCN7A/Nav2.1. Interacts with SCN10A; regulatory subunit of SCN10A/Nav1.8. Interacts with NFASC; probably involved in targeting the sodium channels to the nodes of Ranvier. Intramolecular disulfide bonds favor the voltage-gated sodium channel oligomeric complex assembly. In terms of processing, N-glycosylated. Expressed in the atrium.

Its subcellular location is the cell membrane. Functionally, regulatory subunit of multiple voltage-gated sodium (Nav) channels directly mediating the depolarization of excitable membranes. Navs, also called VGSCs (voltage-gated sodium channels) or VDSCs (voltage-dependent sodium channels), operate by switching between closed and open conformations depending on the voltage difference across the membrane. In the open conformation they allow Na(+) ions to selectively pass through the pore, along their electrochemical gradient. The influx of Na+ ions provokes membrane depolarization, initiating the propagation of electrical signals throughout cells and tissues. The accessory beta subunits participate in localization and functional modulation of the Nav channels. Modulates the activity of SCN2A/Nav1.2, causing a hyperpolarizing shift in the voltage-dependence of inactivation of the channel and increasing the fraction of channels operating in the fast gating mode. Modulates the activity of SCN5A/Nav1.5. Could also regulate the atypical sodium channel SCN7A/Nav2.1. Modulates the activity of SCN10A/Nav1.8, regulating its oligomerization and accelerating the recovery from inactivation. This chain is Sodium channel regulatory subunit beta-3, found in Homo sapiens (Human).